We begin with the raw amino-acid sequence, 535 residues long: ATP-dependent RNA helicase DBP3 (535 aa).

The span at 1–21 (MSKHELKDKKRKSVDGEDVSK) shows a compositional bias: basic and acidic residues. Positions 1–82 (MSKHELKDKK…GSETAPVGDS (82 aa)) are disordered. The span at 22–33 (SKKVKKDKKDKK) shows a compositional bias: basic residues. A compositionally biased stretch (basic and acidic residues) spans 34–72 (DKKAKDGNDKVKDKKDKNKKDKSKTDKNLKEVQETEAHT). The Q motif signature appears at 125–151 (LSFSHLNLHSAIQKEISKFPKPTPIQA). Residues 154–327 (WPYLLAGKDV…STFMRAPVKV (174 aa)) enclose the Helicase ATP-binding domain. 167–174 (AETGSGKT) serves as a coordination point for ATP. The short motif at 274–277 (DEAD) is the DEAD box element. The region spanning 352–505 (KKEKRLLELL…PVPEELMKFG (154 aa)) is the Helicase C-terminal domain.

Belongs to the DEAD box helicase family. DDX5/DBP2 subfamily.

It is found in the nucleus. The protein localises to the nucleolus. It carries out the reaction ATP + H2O = ADP + phosphate + H(+). Its function is as follows. ATP-dependent RNA helicase required for 60S ribosomal subunit synthesis. Involved in efficient pre-rRNA processing, predominantly at site A3, which is necessary for the normal formation of 25S and 5.8S rRNAs. This Eremothecium gossypii (strain ATCC 10895 / CBS 109.51 / FGSC 9923 / NRRL Y-1056) (Yeast) protein is ATP-dependent RNA helicase DBP3 (DBP3).